A 342-amino-acid polypeptide reads, in one-letter code: Farnesyl pyrophosphate synthase 2 (342 aa).

Residues K47, R50, and Q86 each coordinate isopentenyl diphosphate. The Mg(2+) site is built by D93 and D97. Position 102 (R102) interacts with dimethylallyl diphosphate. R103 contacts isopentenyl diphosphate. Residues K190, T191, Q229, K246, and K255 each contribute to the dimethylallyl diphosphate site.

It belongs to the FPP/GGPP synthase family. Requires Mg(2+) as cofactor.

It is found in the cytoplasm. It carries out the reaction isopentenyl diphosphate + dimethylallyl diphosphate = (2E)-geranyl diphosphate + diphosphate. The enzyme catalyses isopentenyl diphosphate + (2E)-geranyl diphosphate = (2E,6E)-farnesyl diphosphate + diphosphate. Its pathway is isoprenoid biosynthesis; farnesyl diphosphate biosynthesis; farnesyl diphosphate from geranyl diphosphate and isopentenyl diphosphate: step 1/1. It functions in the pathway isoprenoid biosynthesis; geranyl diphosphate biosynthesis; geranyl diphosphate from dimethylallyl diphosphate and isopentenyl diphosphate: step 1/1. Functionally, catalyzes the sequential condensation of isopentenyl pyrophosphate with the allylic pyrophosphates, dimethylallyl pyrophosphate, and then with the resultant geranylpyrophosphate to the ultimate product farnesyl pyrophosphate. This is Farnesyl pyrophosphate synthase 2 (FPS2) from Lupinus albus (White lupine).